A 274-amino-acid polypeptide reads, in one-letter code: NADPH-dependent 7-cyano-7-deazaguanine reductase (274 aa).

81 to 83 (IES) lines the substrate pocket. An NADPH-binding site is contributed by 83-84 (SK). Cysteine 182 acts as the Thioimide intermediate in catalysis. Aspartate 189 acts as the Proton donor in catalysis. 221-222 (HE) provides a ligand contact to substrate. 250 to 251 (RG) contacts NADPH.

Belongs to the GTP cyclohydrolase I family. QueF type 2 subfamily. Homodimer.

The protein localises to the cytoplasm. The enzyme catalyses 7-aminomethyl-7-carbaguanine + 2 NADP(+) = 7-cyano-7-deazaguanine + 2 NADPH + 3 H(+). Its pathway is tRNA modification; tRNA-queuosine biosynthesis. Functionally, catalyzes the NADPH-dependent reduction of 7-cyano-7-deazaguanine (preQ0) to 7-aminomethyl-7-deazaguanine (preQ1). This is NADPH-dependent 7-cyano-7-deazaguanine reductase from Hahella chejuensis (strain KCTC 2396).